Here is a 385-residue protein sequence, read N- to C-terminus: Mannitol-1-phosphate 5-dehydrogenase (385 aa).

4-15 contributes to the NAD(+) binding site; that stretch reads AVHFGAGNIGRG.

This sequence belongs to the mannitol dehydrogenase family.

It carries out the reaction D-mannitol 1-phosphate + NAD(+) = beta-D-fructose 6-phosphate + NADH + H(+). In Lactococcus lactis subsp. lactis (strain IL1403) (Streptococcus lactis), this protein is Mannitol-1-phosphate 5-dehydrogenase.